Reading from the N-terminus, the 176-residue chain is Disulfide bond formation protein B (176 aa).

Over 1–14 (MLRFLNQCSQGRGA) the chain is Cytoplasmic. A helical membrane pass occupies residues 15–31 (WLLMAFTALALELTALW). Over 32–49 (FQHVMLLKPCVLCIYERC) the chain is Periplasmic. A disulfide bond links C41 and C44. A helical transmembrane segment spans residues 50-65 (ALFGVLGAALIGAIAP). Residues 66–71 (KTPLRY) are Cytoplasmic-facing. A helical transmembrane segment spans residues 72–89 (VAMVIWLYSAFRGVQLTY). The Periplasmic segment spans residues 90 to 144 (EHTMLQLYPSPFATCDFMVRFPEWLPLDKWVPQVFVASGDCAERQWDFLGMEMPQ). Residues C104 and C130 are joined by a disulfide bond. Residues 145–163 (WLLGIFIAYLIVAVLVVIS) form a helical membrane-spanning segment. Over 164-176 (QPFKAKKRDLFGR) the chain is Cytoplasmic.

It belongs to the DsbB family.

It is found in the cell inner membrane. Required for disulfide bond formation in some periplasmic proteins such as PhoA or OmpA. Acts by oxidizing the DsbA protein. The polypeptide is Disulfide bond formation protein B (Shigella flexneri).